Reading from the N-terminus, the 44-residue chain is Large ribosomal subunit protein bL34 (44 aa).

The interval 21–44 (RMDTSGGRRILSARRRKGRKTISA) is disordered. The segment covering 31–44 (LSARRRKGRKTISA) has biased composition (basic residues).

It belongs to the bacterial ribosomal protein bL34 family.

This chain is Large ribosomal subunit protein bL34, found in Endomicrobium trichonymphae.